A 480-amino-acid chain; its full sequence is Transposase for transposon Tn552 (480 aa).

The segment at residues 36-55 (LSSISKSKGIALSTLYRWNK) is a DNA-binding region (H-T-H motif). One can recognise an Integrase catalytic domain in the interval 155 to 341 (ESSRPNEIWQ…TPINRWNSNH (187 aa)). A disordered region spans residues 438–480 (RKHLKQNIASPSTTDLIKEEKSYGYSPQETTKNVKKLKRYRND). The span at 470–480 (NVKKLKRYRND) shows a compositional bias: basic residues.

This is Transposase for transposon Tn552 from Staphylococcus aureus.